The sequence spans 154 residues: Bacterial ferritin (154 aa).

Residues 1 to 145 (MQGNQAVVDY…QQLRLIELIG (145 aa)) enclose the Ferritin-like diiron domain. Positions 18, 51, 54, 93, 127, and 130 each coordinate Fe cation.

The protein belongs to the bacterioferritin family. Heterooligomer of 24 subunits, arranged as 12 dimers, that are packed together to form an approximately spherical molecule with a central cavity, in which large amounts of iron can be deposited.

The catalysed reaction is 4 Fe(2+) + O2 + 4 H(+) = 4 Fe(3+) + 2 H2O. It carries out the reaction Fe(2+)(in) = Fe(2+)(out). Its function is as follows. Iron-storage protein, whose ferroxidase center binds Fe(2+), oxidizes it using dioxygen to Fe(3+), and participates in the subsequent Fe(3+) oxide mineral core formation within the central cavity of the BFR protein shell. The sequence is that of Bacterial ferritin (bfrA) from Neisseria meningitidis serogroup A / serotype 4A (strain DSM 15465 / Z2491).